Here is a 454-residue protein sequence, read N- to C-terminus: Cathepsin C (454 aa).

Positions 1 to 20 (MHWVFHCILIILACLRFTCA) are cleaved as a signal peptide. A propeptide spanning residues 21–217 (DTPANCTYED…SKELISLTGN (197 aa)) is cleaved from the precursor. An N-linked (GlcNAc...) asparagine glycan is attached at asparagine 25. 3 disulfides stabilise this stretch: cysteine 26/cysteine 107, cysteine 244/cysteine 287, and cysteine 280/cysteine 321. Cysteine 247 is an active-site residue. Residue asparagine 265 is glycosylated (N-linked (GlcNAc...) asparagine). Phenylalanine 291 is a chloride binding site. An N-linked (GlcNAc...) asparagine glycan is attached at asparagine 326. Tyrosine 337 contacts chloride. Active-site residues include histidine 398 and asparagine 420.

This sequence belongs to the peptidase C1 family. Chloride is required as a cofactor.

The protein resides in the lysosome. Thiol protease. Has a role as a digestive enzyme. The polypeptide is Cathepsin C (Schistosoma mansoni (Blood fluke)).